An 866-amino-acid chain; its full sequence is Leucine--tRNA ligase (866 aa).

The 'HIGH' region signature appears at proline 59 to histidine 69. Residues valine 393–glutamine 421 form a disordered region. The span at glutamate 404 to glutamate 418 shows a compositional bias: low complexity. Positions alanine 628 to serine 632 match the 'KMSKS' region motif. Lysine 631 provides a ligand contact to ATP.

Belongs to the class-I aminoacyl-tRNA synthetase family.

The protein localises to the cytoplasm. It catalyses the reaction tRNA(Leu) + L-leucine + ATP = L-leucyl-tRNA(Leu) + AMP + diphosphate. The polypeptide is Leucine--tRNA ligase (Leifsonia xyli subsp. xyli (strain CTCB07)).